The primary structure comprises 79 residues: Acyl carrier protein (79 aa).

In terms of domain architecture, Carrier spans 2–77; it reads SDVAERVKKI…DAIDFIKANA (76 aa). Ser37 bears the O-(pantetheine 4'-phosphoryl)serine mark.

It belongs to the acyl carrier protein (ACP) family. Post-translationally, 4'-phosphopantetheine is transferred from CoA to a specific serine of apo-ACP by AcpS. This modification is essential for activity because fatty acids are bound in thioester linkage to the sulfhydryl of the prosthetic group.

It is found in the cytoplasm. The protein operates within lipid metabolism; fatty acid biosynthesis. Functionally, carrier of the growing fatty acid chain in fatty acid biosynthesis. This Azospirillum brasilense protein is Acyl carrier protein.